The primary structure comprises 121 residues: MTREEIIQAIKEMSVLDLNELVKACEEEFGVSAAAAVVAGGAVAGGAAAEEKTEFDVVLASAGDNKIKVIKVVREITGLGLKEAKEIVDGAPKTLKEGVSKDEAEDMKAKLAEVGATAEVK.

It belongs to the bacterial ribosomal protein bL12 family. In terms of assembly, homodimer. Part of the ribosomal stalk of the 50S ribosomal subunit. Forms a multimeric L10(L12)X complex, where L10 forms an elongated spine to which 2 to 4 L12 dimers bind in a sequential fashion. Binds GTP-bound translation factors.

Forms part of the ribosomal stalk which helps the ribosome interact with GTP-bound translation factors. Is thus essential for accurate translation. The protein is Large ribosomal subunit protein bL12 of Clostridium beijerinckii (strain ATCC 51743 / NCIMB 8052) (Clostridium acetobutylicum).